The primary structure comprises 320 residues: o-succinylbenzoate synthase (320 aa).

Residue K133 is the Proton donor of the active site. Residues D161, E190, and D213 each coordinate Mg(2+). K235 serves as the catalytic Proton acceptor.

This sequence belongs to the mandelate racemase/muconate lactonizing enzyme family. MenC type 1 subfamily. The cofactor is a divalent metal cation.

The enzyme catalyses (1R,6R)-6-hydroxy-2-succinyl-cyclohexa-2,4-diene-1-carboxylate = 2-succinylbenzoate + H2O. The protein operates within quinol/quinone metabolism; 1,4-dihydroxy-2-naphthoate biosynthesis; 1,4-dihydroxy-2-naphthoate from chorismate: step 4/7. It functions in the pathway quinol/quinone metabolism; menaquinone biosynthesis. Its function is as follows. Converts 2-succinyl-6-hydroxy-2,4-cyclohexadiene-1-carboxylate (SHCHC) to 2-succinylbenzoate (OSB). In Escherichia coli (strain SMS-3-5 / SECEC), this protein is o-succinylbenzoate synthase.